The following is a 106-amino-acid chain: Large ribosomal subunit protein bL21 (106 aa).

This sequence belongs to the bacterial ribosomal protein bL21 family. Part of the 50S ribosomal subunit. Contacts protein L20.

Functionally, this protein binds to 23S rRNA in the presence of protein L20. The chain is Large ribosomal subunit protein bL21 from Fervidobacterium nodosum (strain ATCC 35602 / DSM 5306 / Rt17-B1).